We begin with the raw amino-acid sequence, 1358 residues long: Probable aldehyde oxidase 1 (1358 aa).

In terms of domain architecture, 2Fe-2S ferredoxin-type spans 4–91 (AAAVVAVNGE…HCAVTTSEGI (88 aa)). Positions 43, 48, 51, and 73 each coordinate [2Fe-2S] cluster. The region spanning 236-418 (AVTGDGCWFH…ISISIPDWCS (183 aa)) is the FAD-binding PCMH-type domain. The interval 540–567 (KPENANNVPNGSCTTNGTTNGSAESTVD) is disordered. Residues 549–561 (NGSCTTNGTTNGS) show a composition bias toward low complexity.

Belongs to the xanthine dehydrogenase family. In terms of assembly, aldehyde oxidases (AO) are homodimers and heterodimers of AO subunits. [2Fe-2S] cluster serves as cofactor. It depends on FAD as a cofactor. The cofactor is Mo-molybdopterin.

It catalyses the reaction an aldehyde + O2 + H2O = a carboxylate + H2O2 + H(+). The sequence is that of Probable aldehyde oxidase 1 from Oryza sativa subsp. japonica (Rice).